Reading from the N-terminus, the 524-residue chain is 2-isopropylmalate synthase (524 aa).

The region spanning 15 to 277 (VVIFDTTMRD…ETKIDTTHIT (263 aa)) is the Pyruvate carboxyltransferase domain. Positions 24, 212, 214, and 248 each coordinate Mn(2+). The segment at 401–524 (RVQRLRVVAG…RPEAAIASGF (124 aa)) is regulatory domain.

It belongs to the alpha-IPM synthase/homocitrate synthase family. LeuA type 1 subfamily. In terms of assembly, homodimer. Mn(2+) serves as cofactor.

It is found in the cytoplasm. The enzyme catalyses 3-methyl-2-oxobutanoate + acetyl-CoA + H2O = (2S)-2-isopropylmalate + CoA + H(+). The protein operates within amino-acid biosynthesis; L-leucine biosynthesis; L-leucine from 3-methyl-2-oxobutanoate: step 1/4. Functionally, catalyzes the condensation of the acetyl group of acetyl-CoA with 3-methyl-2-oxobutanoate (2-ketoisovalerate) to form 3-carboxy-3-hydroxy-4-methylpentanoate (2-isopropylmalate). This Caulobacter sp. (strain K31) protein is 2-isopropylmalate synthase.